A 183-amino-acid chain; its full sequence is Crossover junction endodeoxyribonuclease RuvC (183 aa).

Residues Asp7, Glu66, and Asp138 contribute to the active site. Mg(2+) contacts are provided by Asp7, Glu66, and Asp138.

This sequence belongs to the RuvC family. Homodimer which binds Holliday junction (HJ) DNA. The HJ becomes 2-fold symmetrical on binding to RuvC with unstacked arms; it has a different conformation from HJ DNA in complex with RuvA. In the full resolvosome a probable DNA-RuvA(4)-RuvB(12)-RuvC(2) complex forms which resolves the HJ. It depends on Mg(2+) as a cofactor.

The protein localises to the cytoplasm. It carries out the reaction Endonucleolytic cleavage at a junction such as a reciprocal single-stranded crossover between two homologous DNA duplexes (Holliday junction).. In terms of biological role, the RuvA-RuvB-RuvC complex processes Holliday junction (HJ) DNA during genetic recombination and DNA repair. Endonuclease that resolves HJ intermediates. Cleaves cruciform DNA by making single-stranded nicks across the HJ at symmetrical positions within the homologous arms, yielding a 5'-phosphate and a 3'-hydroxyl group; requires a central core of homology in the junction. The consensus cleavage sequence is 5'-(A/T)TT(C/G)-3'. Cleavage occurs on the 3'-side of the TT dinucleotide at the point of strand exchange. HJ branch migration catalyzed by RuvA-RuvB allows RuvC to scan DNA until it finds its consensus sequence, where it cleaves and resolves the cruciform DNA. This Burkholderia ambifaria (strain ATCC BAA-244 / DSM 16087 / CCUG 44356 / LMG 19182 / AMMD) (Burkholderia cepacia (strain AMMD)) protein is Crossover junction endodeoxyribonuclease RuvC.